The primary structure comprises 233 residues: H-2 class II histocompatibility antigen, A-S alpha chain (233 aa).

Positions 1-88 (EDDIEADHVG…KRSNSTPATN (88 aa)) are alpha-1. Topologically, residues 1-195 (EDDIEADHVG…IPAPMSELTE (195 aa)) are extracellular. Positions 89-182 (EAPQATVFPK…GLEEPVLKHW (94 aa)) are alpha-2. Residues 91–183 (PQATVFPKSP…LEEPVLKHWE (93 aa)) enclose the Ig-like C1-type domain. Cys111 and Cys167 are oxidised to a cystine. An N-linked (GlcNAc...) asparagine glycan is attached at Asn122. Residues 183 to 195 (EPEIPAPMSELTE) are connecting peptide. Residues 196–221 (TVVCALGLSVGLVGIVVGTIFIIQGL) traverse the membrane as a helical segment. Residues 222 to 233 (RSGGTSRHPGPL) are Cytoplasmic-facing.

Belongs to the MHC class II family.

It localises to the membrane. This Mus musculus (Mouse) protein is H-2 class II histocompatibility antigen, A-S alpha chain (H2-Aa).